We begin with the raw amino-acid sequence, 487 residues long: Probable glycine dehydrogenase (decarboxylating) subunit 2 (487 aa).

Position 273 is an N6-(pyridoxal phosphate)lysine (lysine 273).

The protein belongs to the GcvP family. C-terminal subunit subfamily. The glycine cleavage system is composed of four proteins: P, T, L and H. In this organism, the P 'protein' is a heterodimer of two subunits. Pyridoxal 5'-phosphate serves as cofactor.

It carries out the reaction N(6)-[(R)-lipoyl]-L-lysyl-[glycine-cleavage complex H protein] + glycine + H(+) = N(6)-[(R)-S(8)-aminomethyldihydrolipoyl]-L-lysyl-[glycine-cleavage complex H protein] + CO2. In terms of biological role, the glycine cleavage system catalyzes the degradation of glycine. The P protein binds the alpha-amino group of glycine through its pyridoxal phosphate cofactor; CO(2) is released and the remaining methylamine moiety is then transferred to the lipoamide cofactor of the H protein. The polypeptide is Probable glycine dehydrogenase (decarboxylating) subunit 2 (Lysinibacillus sphaericus (strain C3-41)).